A 509-amino-acid polypeptide reads, in one-letter code: Hexokinase-4, chloroplastic (509 aa).

The N-terminal 37 residues, 1–37 (MSAAAAIASPIPAAIAVVQQQRRGRSRGGGSGAAAVR), are a transit peptide targeting the chloroplast. The region spanning 45–496 (SAIAPILADL…SGIGAALLAA (452 aa)) is the Hexokinase domain. Residues 100 to 238 (TGNETGLFYA…GLDMRVSALV (139 aa)) are hexokinase small subdomain. Positions 114, 115, and 116 each coordinate ADP. Residues Thr-204, Lys-205, Asn-239, and Asp-240 each contribute to the D-glucose site. A hexokinase large subdomain region spans residues 239–485 (NDTVGTLAGA…NRIAIEHTKD (247 aa)). Thr-263 contacts ADP. 3 residues coordinate D-glucose: Asn-266, Glu-294, and Glu-324. Gly-450 lines the ADP pocket.

The protein belongs to the hexokinase family. Expressed in roots, leaves, flowers, immature seeds, endosperm and seed coat.

Its subcellular location is the plastid. The protein localises to the chloroplast stroma. It catalyses the reaction a D-hexose + ATP = a D-hexose 6-phosphate + ADP + H(+). It carries out the reaction D-fructose + ATP = D-fructose 6-phosphate + ADP + H(+). The enzyme catalyses D-glucose + ATP = D-glucose 6-phosphate + ADP + H(+). The protein operates within carbohydrate metabolism; hexose metabolism. It functions in the pathway carbohydrate degradation; glycolysis; D-glyceraldehyde 3-phosphate and glycerone phosphate from D-glucose: step 1/4. Fructose and glucose phosphorylating enzyme. The polypeptide is Hexokinase-4, chloroplastic (HXK4) (Oryza sativa subsp. japonica (Rice)).